Reading from the N-terminus, the 485-residue chain is Efflux pump bik6 (485 aa).

Helical transmembrane passes span 42–62 (VYTTALWALTTCWITFASAIY), 86–106 (LLIFGFALGPMLWAPLCEVYG), 108–128 (KWPALAPYFISAAFAFGTATA), 139–159 (FFAGVFGSSPISITGGSIVDI), 172–192 (YGITIAAAPTLGPIIGGAFIA), and 199–219 (WTEYLTGIVMMVQFVLDALWL). Asn241 carries N-linked (GlcNAc...) asparagine glycosylation. The next 6 helical transmembrane spans lie at 269-289 (MLLDPICLLLTIYTSFVYAIL), 306-326 (WGPVVSQLPFLSLLIGCLFAA), 353-373 (LPPMMVGGFAFSAGLFLFGWT), 379-399 (SSPWPSIIGVFLTGVGFTTIF), 417-437 (AIAANTFVRSMAAGAFPLFVW), and 447-467 (WGSTIFACISVLLLPAPFLFF).

The protein belongs to the major facilitator superfamily.

It is found in the membrane. Its function is as follows. Efflux pump; part of the gene cluster that mediates the biosynthesis of bikaverin, a red pigment also considered as a mycotoxin. The chain is Efflux pump bik6 from Gibberella fujikuroi (strain CBS 195.34 / IMI 58289 / NRRL A-6831) (Bakanae and foot rot disease fungus).